A 112-amino-acid polypeptide reads, in one-letter code: Mu-ctenitoxin-Pn1a (112 aa).

Positions M1–G19 are cleaved as a signal peptide. Residues E20 to R33 constitute a propeptide that is removed on maturation. Intrachain disulfides connect C39–C56, C46–C62, C53–C85, C55–C73, C64–C71, C91–C106, and C102–C110. G111 carries the glycine amide modification.

This sequence belongs to the neurotoxin 04 (omega-agtx) family. 02 (Tx1) subfamily. Contains 7 disulfide bonds. Expressed by the venom gland.

Its subcellular location is the secreted. In terms of biological role, reversible inhibitor of neuronal sodium channels (Nav1.2/ SCN2A) that binds in proximity to site 1 and displays increasing affinity as the membrane potential is depolarized. Induces excitatory symptoms and spastic paralysis in mice. The protein is Mu-ctenitoxin-Pn1a of Phoneutria nigriventer (Brazilian armed spider).